The following is a 191-amino-acid chain: Prostaglandin-H2 D-isomerase (191 aa).

Positions 1 to 24 are cleaved as a signal peptide; that stretch reads MATPNRPWMGLLLLGVLGVLQTPA. An N-linked (GlcNAc...) asparagine glycan is attached at Asn51. Cys65 (nucleophile) is an active-site residue. N-linked (GlcNAc...) asparagine glycosylation occurs at Asn78. A disulfide bridge links Cys89 with Cys186.

The protein belongs to the calycin superfamily. Lipocalin family. In terms of assembly, monomer. In the male reproductive system, it is expressed in the testis and epididymis, and is secreted into the seminal fluid.

The protein resides in the rough endoplasmic reticulum. It localises to the nucleus membrane. Its subcellular location is the golgi apparatus. It is found in the cytoplasm. The protein localises to the perinuclear region. The protein resides in the secreted. The enzyme catalyses prostaglandin H2 = prostaglandin D2. Catalyzes the conversion of PGH2 to PGD2, a prostaglandin involved in smooth muscle contraction/relaxation and a potent inhibitor of platelet aggregation. Involved in a variety of CNS functions, such as sedation, NREM sleep and PGE2-induced allodynia, and may have an anti-apoptotic role in oligodendrocytes. Binds small non-substrate lipophilic molecules, including biliverdin, bilirubin, retinal, retinoic acid and thyroid hormone, and may act as a scavenger for harmful hydrophobic molecules and as a secretory retinoid and thyroid hormone transporter. Possibly involved in development and maintenance of the blood-brain, blood-retina, blood-aqueous humor and blood-testis barrier. It is likely to play important roles in both maturation and maintenance of the central nervous system and male reproductive system. Involved in PLA2G3-dependent maturation of mast cells. PLA2G3 is secreted by immature mast cells and acts on nearby fibroblasts upstream to PTDGS to synthesize PGD2, which in turn promotes mast cell maturation and degranulation via PTGDR. The protein is Prostaglandin-H2 D-isomerase (PTGDS) of Ovis aries (Sheep).